A 60-amino-acid chain; its full sequence is Mastoparan-V (60 aa).

The N-terminal stretch at 1–27 (MKNTILILFTAFIALLGFFGMSAEALA) is a signal peptide. AXPX repeat units follow at residues 27-30 (ADPV), 31-34 (ADPL), 35-38 (AGPN), and 41-44 (ADPE). Residues 28–45 (DPVADPLAGPNAEADPEA) constitute a propeptide that is removed on maturation. At leucine 59 the chain carries Leucine amide.

This sequence belongs to the MCD family. Mastoparan subfamily. As to expression, expressed by the venom gland.

It is found in the secreted. Its subcellular location is the target cell membrane. Its function is as follows. Antimicrobial and mast cell degranulating peptide. Has broad spectrum antibacterial activity against both Gram-positive and Gram-negative bacteria (S.aureus MIC=32-64 ug/ml, S.xylosus MIC=3 ug/ml, S.alactolyticus MIC=16 ug/ml, C.koseri MIC=4 ug/ml, E.coli MIC=8 ug/ml, K.pneumoniae MIC=64 ug/ml, P.aerugiosa MIC=256 ug/ml, S.choleraesuis MIC=32 ug/ml, S.typhimurium MIC=32 ug/ml, V.parahamelytics MIC=32 ug/ml). Affects membrane permeability of E.coli. Shows hemolytic activities on sheep, chicken and human erythrocytes. Its mast cell degranulation activity may be related to the activation of G-protein coupled receptors in mast cells as well as interaction with other proteins located in cell endosomal membranes in the mast cells. This is Mastoparan-V from Vespa velutina flavitarsus (Asian hornet).